The chain runs to 463 residues: SCF E3 ubiquitin ligase complex F-box protein pof2 (463 aa).

The region spanning 1–42 is the F-box domain; that stretch reads MRVPNEVCFNILSYLEADELRCKSTVCTSWRNFIIPTLWEKV. LRR repeat units lie at residues 145 to 170, 171 to 196, 198 to 220, 225 to 247, 249 to 271, 278 to 299, 304 to 326, 328 to 353, 354 to 378, and 380 to 405; these read CPNLKALNIGNCGLVEDTGMVQIIKR, CPYLNRLIIPNCRKLTDVSLQILSEK, DLIELDISGCEGFHNADTLSRLV, GLKELSMDGCTELSHFITFLNLN, ELDAMRALSLNNLPDLKDSDIEL, KLNSLFLSKCIGLTDSSLLSLT, SLTTLHLGHCYEITDIGVQCLLK, CKNITYIDFGGCLRLSDIAVSAIAKL, PYLQRVGLVKCICLTDLSVILLSGS, and SRNLERVHLSYCIGLTAKSVSYLMYN.

Part of a SCF E3 ubiquitin ligase complex. Interacts with skp1.

It is found in the mitochondrion. Involved in substrate recognition in ubiquitin-dependent degradation. The polypeptide is SCF E3 ubiquitin ligase complex F-box protein pof2 (pof2) (Schizosaccharomyces pombe (strain 972 / ATCC 24843) (Fission yeast)).